Here is a 352-residue protein sequence, read N- to C-terminus: Protein RecA (352 aa).

G68–T75 serves as a coordination point for ATP.

Belongs to the RecA family.

The protein resides in the cytoplasm. In terms of biological role, can catalyze the hydrolysis of ATP in the presence of single-stranded DNA, the ATP-dependent uptake of single-stranded DNA by duplex DNA, and the ATP-dependent hybridization of homologous single-stranded DNAs. It interacts with LexA causing its activation and leading to its autocatalytic cleavage. This Clostridium perfringens (strain ATCC 13124 / DSM 756 / JCM 1290 / NCIMB 6125 / NCTC 8237 / Type A) protein is Protein RecA.